The chain runs to 349 residues: Phenylalanine--tRNA ligase alpha subunit (349 aa).

Glutamate 258 lines the Mg(2+) pocket.

This sequence belongs to the class-II aminoacyl-tRNA synthetase family. Phe-tRNA synthetase alpha subunit type 1 subfamily. Tetramer of two alpha and two beta subunits. The cofactor is Mg(2+).

It localises to the cytoplasm. The enzyme catalyses tRNA(Phe) + L-phenylalanine + ATP = L-phenylalanyl-tRNA(Phe) + AMP + diphosphate + H(+). The chain is Phenylalanine--tRNA ligase alpha subunit from Rickettsia rickettsii (strain Sheila Smith).